Reading from the N-terminus, the 332-residue chain is Glyceraldehyde-3-phosphate dehydrogenase 2 (332 aa).

Residues 11-12 (RI), Asp-32, and Arg-77 each bind NAD(+). Residues 148 to 150 (SCT), Thr-179, 208 to 209 (TG), and Arg-231 contribute to the D-glyceraldehyde 3-phosphate site. Catalysis depends on Cys-149, which acts as the Nucleophile. Tyr-273 carries the post-translational modification Phosphotyrosine. Thr-274 bears the Phosphothreonine mark. NAD(+) is bound at residue Asn-313.

This sequence belongs to the glyceraldehyde-3-phosphate dehydrogenase family. Homotetramer.

It is found in the cytoplasm. The enzyme catalyses D-glyceraldehyde 3-phosphate + phosphate + NAD(+) = (2R)-3-phospho-glyceroyl phosphate + NADH + H(+). It participates in carbohydrate degradation; glycolysis; pyruvate from D-glyceraldehyde 3-phosphate: step 1/5. The protein is Glyceraldehyde-3-phosphate dehydrogenase 2 (Gapdh2) of Drosophila melanogaster (Fruit fly).